The primary structure comprises 148 residues: Large ribosomal subunit protein bL9 (148 aa).

It belongs to the bacterial ribosomal protein bL9 family.

Its function is as follows. Binds to the 23S rRNA. The sequence is that of Large ribosomal subunit protein bL9 from Heliobacterium modesticaldum (strain ATCC 51547 / Ice1).